The primary structure comprises 142 residues: MFSKTLSVSRLLMTRSFYSSTVVKNVSIFDFEKVYNLSKRPTGDKSTVLIDVREPDEFKQGAIETSYNLPVGKIEEAMKLSDEEFSKTYGFSKPVFEDNVVVYCRSGRRSTTASDILTKLGYKNIGNYTGSWLEWSDKIKSK.

A mitochondrion-targeting transit peptide spans 1–25 (MFSKTLSVSRLLMTRSFYSSTVVKN). The Rhodanese domain occupies 43–140 (GDKSTVLIDV…SWLEWSDKIK (98 aa)). Cys-104 functions as the Cysteine persulfide intermediate in the catalytic mechanism.

It is found in the mitochondrion. It carries out the reaction thiosulfate + hydrogen cyanide = thiocyanate + sulfite + 2 H(+). Thiosulfate sulfurtransferase which catalyzes the transfer of sulfane sulfur from thiosulfate to cyanide. In Schizosaccharomyces pombe (strain 972 / ATCC 24843) (Fission yeast), this protein is Putative thiosulfate sulfurtransferase, mitochondrial.